The following is a 1453-amino-acid chain: Scavenger receptor cysteine-rich type 1 protein M160 (1453 aa).

Residues 1–40 (MMLPQNSWHIDFGRCCCHQNLFSAVVTCILLLNSCFLISS) form the signal peptide. Residues 41-1359 (FNGTDLELRL…LKSLNASSGH (1319 aa)) are Extracellular-facing. Asn-42, Asn-78, Asn-120, and Asn-161 each carry an N-linked (GlcNAc...) asparagine glycan. SRCR domains lie at 48 to 148 (LRLV…VNCY), 155 to 255 (LRLV…LTCY), 262 to 362 (LRLV…VICS), 369 to 469 (LRLA…VICS), 476 to 576 (LRLV…VTCS), 583 to 683 (LRLV…VICS), 690 to 790 (LRLV…LICS), 795 to 895 (PRLV…VVCS), and 900 to 1000 (VRLV…VICT). 3 disulfide bridges follow: Cys-73–Cys-137, Cys-86–Cys-147, and Cys-117–Cys-127. Intrachain disulfides connect Cys-180–Cys-244, Cys-193–Cys-254, Cys-224–Cys-234, Cys-287–Cys-351, Cys-300–Cys-361, and Cys-331–Cys-341. Asn-334, Asn-377, Asn-441, Asn-548, and Asn-637 each carry an N-linked (GlcNAc...) asparagine glycan. 18 disulfide bridges follow: Cys-394–Cys-458, Cys-407–Cys-468, Cys-438–Cys-448, Cys-501–Cys-565, Cys-514–Cys-575, Cys-545–Cys-555, Cys-608–Cys-672, Cys-621–Cys-682, Cys-652–Cys-662, Cys-715–Cys-779, Cys-728–Cys-789, Cys-759–Cys-769, Cys-820–Cys-884, Cys-833–Cys-894, Cys-864–Cys-874, Cys-925–Cys-989, Cys-938–Cys-999, and Cys-969–Cys-979. N-linked (GlcNAc...) asparagine glycans are attached at residues Asn-972, Asn-1013, Asn-1084, and Asn-1104. 3 SRCR domains span residues 1036–1136 (LRLV…VICS), 1141–1243 (LRLY…ITCE), and 1246–1346 (IRVR…VRCS). Intrachain disulfides connect Cys-1061–Cys-1125, Cys-1074–Cys-1135, and Cys-1105–Cys-1115. Asn-1161 and Asn-1171 each carry an N-linked (GlcNAc...) asparagine glycan. 5 disulfides stabilise this stretch: Cys-1181-Cys-1242, Cys-1212-Cys-1222, Cys-1271-Cys-1335, Cys-1284-Cys-1345, and Cys-1315-Cys-1325. N-linked (GlcNAc...) asparagine glycans are attached at residues Asn-1318 and Asn-1354. The helical transmembrane segment at 1360 to 1380 (LALILSSIFGLLLLVLFILFL) threads the bilayer. At 1381 to 1453 (TWCRVQKQKH…GVLPASEATK (73 aa)) the chain is on the cytoplasmic side. Residues 1418-1435 (EDPHGTRTSDDTPNHGCE) are compositionally biased toward basic and acidic residues. The segment at 1418 to 1453 (EDPHGTRTSDDTPNHGCEDASDTSLLGVLPASEATK) is disordered.

Isoform 1 is highly expressed in the spleen, lymph nodes, thymus, and fetal liver and weakly expressed in bone marrow and no expression was found in peripheral blood leukocytes. Isoform 1 expression is restricted to the monocyte and macrophage cell lines. Isoform 2 is only expressed in spleen.

Its subcellular location is the cell membrane. The protein localises to the secreted. The chain is Scavenger receptor cysteine-rich type 1 protein M160 (CD163L1) from Homo sapiens (Human).